We begin with the raw amino-acid sequence, 556 residues long: Insulin-like growth factor 2 mRNA-binding protein 2 (556 aa).

RRM domains follow at residues 3 to 76 (NKLY…YSVS) and 82 to 157 (RKIQ…YIPD). A Phosphoserine modification is found at serine 11. The interval 156–188 (PDEEVSSPSPPQRAQRGDHSSREQGHAPGGTSQ) is disordered. Serine 162 and serine 164 each carry phosphoserine. The span at 170-180 (QRGDHSSREQG) shows a compositional bias: basic and acidic residues. KH domains follow at residues 193-258 (DFPL…CRMI), 274-341 (EIPL…EIEI), 384-449 (QEIV…QGRI), and 466-532 (KLEA…QRKI). The residue at position 507 (threonine 507) is a Phosphothreonine.

Belongs to the RRM IMP/VICKZ family. In terms of assembly, can form homooligomers and heterooligomers with IGF2BP1 and IGF2BP3 in an RNA-dependent manner. Interacts with HNRPD. Interacts with IGF2BP1. Interacts with ELAVL1, DHX9, HNRNPU, MATR3 and PABPC1.

It localises to the nucleus. The protein localises to the cytoplasm. It is found in the P-body. The protein resides in the stress granule. RNA-binding factor that recruits target transcripts to cytoplasmic protein-RNA complexes (mRNPs). This transcript 'caging' into mRNPs allows mRNA transport and transient storage. It also modulates the rate and location at which target transcripts encounter the translational apparatus and shields them from endonuclease attacks or microRNA-mediated degradation. Preferentially binds to N6-methyladenosine (m6A)-containing mRNAs and increases their stability. Binds to the 5'-UTR of the insulin-like growth factor 2 (IGF2) mRNAs. Binding is isoform-specific. Binds to beta-actin/ACTB and MYC transcripts. Increases MYC mRNA stability by binding to the coding region instability determinant (CRD) and binding is enhanced by m6A-modification of the CRD. This is Insulin-like growth factor 2 mRNA-binding protein 2 (IGF2BP2) from Pongo abelii (Sumatran orangutan).